The primary structure comprises 498 residues: ATP synthase subunit beta, chloroplastic (498 aa).

172–179 (GGAGVGKT) is an ATP binding site.

This sequence belongs to the ATPase alpha/beta chains family. F-type ATPases have 2 components, CF(1) - the catalytic core - and CF(0) - the membrane proton channel. CF(1) has five subunits: alpha(3), beta(3), gamma(1), delta(1), epsilon(1). CF(0) has four main subunits: a(1), b(1), b'(1) and c(9-12).

It is found in the plastid. The protein resides in the chloroplast thylakoid membrane. The catalysed reaction is ATP + H2O + 4 H(+)(in) = ADP + phosphate + 5 H(+)(out). Functionally, produces ATP from ADP in the presence of a proton gradient across the membrane. The catalytic sites are hosted primarily by the beta subunits. The sequence is that of ATP synthase subunit beta, chloroplastic from Solanum lycopersicum (Tomato).